Here is a 223-residue protein sequence, read N- to C-terminus: uncharacterized protein (223 aa).

This is an uncharacterized protein from Mycoplasma pneumoniae (strain ATCC 29342 / M129 / Subtype 1) (Mycoplasmoides pneumoniae).